We begin with the raw amino-acid sequence, 1123 residues long: Leucine--tRNA ligase, cytoplasmic (1123 aa).

The 'HIGH' region signature appears at 84-94 (PYMNGRLHAGH). The short motif at 757–761 (KMSKS) is the 'KMSKS' region element. Lys760 provides a ligand contact to ATP.

This sequence belongs to the class-I aminoacyl-tRNA synthetase family.

The protein resides in the cytoplasm. The catalysed reaction is tRNA(Leu) + L-leucine + ATP = L-leucyl-tRNA(Leu) + AMP + diphosphate. The polypeptide is Leucine--tRNA ligase, cytoplasmic (leu-6) (Neurospora crassa (strain ATCC 24698 / 74-OR23-1A / CBS 708.71 / DSM 1257 / FGSC 987)).